An 89-amino-acid polypeptide reads, in one-letter code: MSLTQARKQEIFEAYQIHPTDTGSADVQVAVLSERISRLSQHLQQNKKDFASRTGLLRLIGQRKRLLAYILKQDRDRYKALIERLGIRG.

The protein belongs to the universal ribosomal protein uS15 family. In terms of assembly, part of the 30S ribosomal subunit. Forms a bridge to the 50S subunit in the 70S ribosome, contacting the 23S rRNA.

Functionally, one of the primary rRNA binding proteins, it binds directly to 16S rRNA where it helps nucleate assembly of the platform of the 30S subunit by binding and bridging several RNA helices of the 16S rRNA. Forms an intersubunit bridge (bridge B4) with the 23S rRNA of the 50S subunit in the ribosome. This is Small ribosomal subunit protein uS15 from Synechococcus elongatus (strain ATCC 33912 / PCC 7942 / FACHB-805) (Anacystis nidulans R2).